The following is a 540-amino-acid chain: UDP-N-acetylmuramyl-tripeptide synthetase (540 aa).

S33 provides a ligand contact to UDP-N-acetyl-alpha-D-muramoyl-L-alanyl-D-glutamate. ATP is bound at residue 114–120 (GTEGKSS). Residues 158-159 (TT), S185, and R195 contribute to the UDP-N-acetyl-alpha-D-muramoyl-L-alanyl-D-glutamate site. Residue K227 is modified to N6-carboxylysine.

Belongs to the MurCDEF family. MurE subfamily. Carboxylation is probably crucial for Mg(2+) binding and, consequently, for the gamma-phosphate positioning of ATP.

It localises to the cytoplasm. Its pathway is cell wall biogenesis; peptidoglycan biosynthesis. Its function is as follows. Catalyzes the addition of an amino acid to the nucleotide precursor UDP-N-acetylmuramoyl-L-alanyl-D-glutamate (UMAG) in the biosynthesis of bacterial cell-wall peptidoglycan. This is UDP-N-acetylmuramyl-tripeptide synthetase from Treponema pallidum (strain Nichols).